Reading from the N-terminus, the 515-residue chain is ATP synthase subunit alpha (515 aa).

169 to 176 (GDRQTGKT) is a binding site for ATP.

It belongs to the ATPase alpha/beta chains family. As to quaternary structure, F-type ATPases have 2 components, CF(1) - the catalytic core - and CF(0) - the membrane proton channel. CF(1) has five subunits: alpha(3), beta(3), gamma(1), delta(1), epsilon(1). CF(0) has three main subunits: a(1), b(2) and c(9-12). The alpha and beta chains form an alternating ring which encloses part of the gamma chain. CF(1) is attached to CF(0) by a central stalk formed by the gamma and epsilon chains, while a peripheral stalk is formed by the delta and b chains.

It localises to the cell inner membrane. It carries out the reaction ATP + H2O + 4 H(+)(in) = ADP + phosphate + 5 H(+)(out). Functionally, produces ATP from ADP in the presence of a proton gradient across the membrane. The alpha chain is a regulatory subunit. The sequence is that of ATP synthase subunit alpha from Neisseria meningitidis serogroup C / serotype 2a (strain ATCC 700532 / DSM 15464 / FAM18).